Here is a 365-residue protein sequence, read N- to C-terminus: Dihydroorotate dehydrogenase (quinone) (365 aa).

FMN is bound by residues 61 to 65 (AGFDK) and serine 85. Lysine 65 is a substrate binding site. 110 to 114 (NRMGF) is a binding site for substrate. FMN-binding residues include asparagine 139 and asparagine 170. Asparagine 170 provides a ligand contact to substrate. Serine 173 serves as the catalytic Nucleophile. Asparagine 175 provides a ligand contact to substrate. FMN is bound by residues lysine 214 and serine 242. Residue 243-244 (NT) coordinates substrate. Residues glycine 266, glycine 295, and 316-317 (YS) contribute to the FMN site.

This sequence belongs to the dihydroorotate dehydrogenase family. Type 2 subfamily. As to quaternary structure, monomer. Requires FMN as cofactor.

The protein localises to the cell membrane. It carries out the reaction (S)-dihydroorotate + a quinone = orotate + a quinol. It functions in the pathway pyrimidine metabolism; UMP biosynthesis via de novo pathway; orotate from (S)-dihydroorotate (quinone route): step 1/1. Functionally, catalyzes the conversion of dihydroorotate to orotate with quinone as electron acceptor. The polypeptide is Dihydroorotate dehydrogenase (quinone) (Bradyrhizobium diazoefficiens (strain JCM 10833 / BCRC 13528 / IAM 13628 / NBRC 14792 / USDA 110)).